The chain runs to 610 residues: Glucoamylase ARB_02327-1 (610 aa).

A signal peptide spans 1–18 (MRVTSLLWSSLVIPAAVG). Residues 19–24 (FQVRFK) constitute a propeptide that is removed on maturation. Asparagine 49 is a glycosylation site (N-linked (GlcNAc...) asparagine). Tryptophan 143 lines the substrate pocket. An N-linked (GlcNAc...) asparagine glycan is attached at asparagine 194. Aspartate 199 functions as the Proton acceptor in the catalytic mechanism. The Proton donor role is filled by glutamate 202. 3 cysteine pairs are disulfide-bonded: cysteine 233–cysteine 236, cysteine 245–cysteine 472, and cysteine 285–cysteine 293. Positions 504-610 (TALPTKNNVR…SGAIKRDTWR (107 aa)) constitute a CBM20 domain.

This sequence belongs to the glycosyl hydrolase 15 family.

Its subcellular location is the secreted. The enzyme catalyses Hydrolysis of terminal (1-&gt;4)-linked alpha-D-glucose residues successively from non-reducing ends of the chains with release of beta-D-glucose.. The protein is Glucoamylase ARB_02327-1 of Arthroderma benhamiae (strain ATCC MYA-4681 / CBS 112371) (Trichophyton mentagrophytes).